We begin with the raw amino-acid sequence, 69 residues long: MLCLPVFIILLLLASPAAPKSLETRIQNDLIRAGLTDADLKTEKGFLSGLLNVAGSVCCKVDTSCCSNQ.

A signal peptide spans 1-19 (MLCLPVFIILLLLASPAAP). A propeptide spanning residues 20–54 (KSLETRIQNDLIRAGLTDADLKTEKGFLSGLLNVA) is cleaved from the precursor.

Belongs to the conotoxin T superfamily. Post-translationally, contains 2 disulfide bonds that can be either 'C1-C3, C2-C4' or 'C1-C4, C2-C3', since these disulfide connectivities have been observed for conotoxins with cysteine framework V (for examples, see AC P0DQQ7 and AC P81755). In terms of tissue distribution, expressed by the venom duct.

Its subcellular location is the secreted. In Conus litteratus (Lettered cone), this protein is Conotoxin Lt5.7.